A 408-amino-acid chain; its full sequence is DNA polymerase processivity factor (408 aa).

Positions 344–353 match the Nuclear localization signal motif; it reads KKRRNLLTKR.

This sequence belongs to the herpesviridae DNA polymerase processivity factor family. Interacts with the DNA polymerase catalytic subunit. Interacts with the origin-binding protein.

The protein resides in the host nucleus. In terms of biological role, plays an essential role in viral DNA replication by acting as the polymerase accessory subunit. Associates with the viral polymerase to increase its processivity and forms high-affinity direct interactions with DNA. Facilitates the origin-binding protein loading onto DNA thus increasing its ability to assemble into a functional complex capable of unwinding duplex DNA. The chain is DNA polymerase processivity factor from Varicella-zoster virus (strain Dumas) (HHV-3).